A 273-amino-acid polypeptide reads, in one-letter code: 4-hydroxy-tetrahydrodipicolinate reductase (273 aa).

Residues 12–17 (GAGGRM) and Glu38 contribute to the NAD(+) site. Residue Arg39 coordinates NADP(+). Residues 102–104 (GTT) and 126–129 (AANF) each bind NAD(+). His159 acts as the Proton donor/acceptor in catalysis. Residue His160 participates in (S)-2,3,4,5-tetrahydrodipicolinate binding. The Proton donor role is filled by Lys163. Residue 169–170 (GT) participates in (S)-2,3,4,5-tetrahydrodipicolinate binding.

It belongs to the DapB family. Homotetramer.

The protein localises to the cytoplasm. The catalysed reaction is (S)-2,3,4,5-tetrahydrodipicolinate + NAD(+) + H2O = (2S,4S)-4-hydroxy-2,3,4,5-tetrahydrodipicolinate + NADH + H(+). The enzyme catalyses (S)-2,3,4,5-tetrahydrodipicolinate + NADP(+) + H2O = (2S,4S)-4-hydroxy-2,3,4,5-tetrahydrodipicolinate + NADPH + H(+). It functions in the pathway amino-acid biosynthesis; L-lysine biosynthesis via DAP pathway; (S)-tetrahydrodipicolinate from L-aspartate: step 4/4. In terms of biological role, catalyzes the conversion of 4-hydroxy-tetrahydrodipicolinate (HTPA) to tetrahydrodipicolinate. The polypeptide is 4-hydroxy-tetrahydrodipicolinate reductase (Pectobacterium atrosepticum (strain SCRI 1043 / ATCC BAA-672) (Erwinia carotovora subsp. atroseptica)).